Consider the following 515-residue polypeptide: Bifunctional purine biosynthesis protein PurH (515 aa).

The MGS-like domain maps to 1-145 (MTKRALISVS…KNHASVTVVV (145 aa)).

It belongs to the PurH family.

The enzyme catalyses (6R)-10-formyltetrahydrofolate + 5-amino-1-(5-phospho-beta-D-ribosyl)imidazole-4-carboxamide = 5-formamido-1-(5-phospho-D-ribosyl)imidazole-4-carboxamide + (6S)-5,6,7,8-tetrahydrofolate. The catalysed reaction is IMP + H2O = 5-formamido-1-(5-phospho-D-ribosyl)imidazole-4-carboxamide. The protein operates within purine metabolism; IMP biosynthesis via de novo pathway; 5-formamido-1-(5-phospho-D-ribosyl)imidazole-4-carboxamide from 5-amino-1-(5-phospho-D-ribosyl)imidazole-4-carboxamide (10-formyl THF route): step 1/1. It functions in the pathway purine metabolism; IMP biosynthesis via de novo pathway; IMP from 5-formamido-1-(5-phospho-D-ribosyl)imidazole-4-carboxamide: step 1/1. This chain is Bifunctional purine biosynthesis protein PurH, found in Streptococcus agalactiae serotype III (strain NEM316).